The primary structure comprises 279 residues: Diaminopimelate epimerase (279 aa).

Residues N12, Q45, and N65 each coordinate substrate. C74 acts as the Proton donor in catalysis. Substrate-binding positions include 75 to 76 (GN), N162, N195, and 213 to 214 (ER). C222 serves as the catalytic Proton acceptor. A substrate-binding site is contributed by 223 to 224 (GT).

The protein belongs to the diaminopimelate epimerase family. As to quaternary structure, homodimer.

Its subcellular location is the cytoplasm. It catalyses the reaction (2S,6S)-2,6-diaminopimelate = meso-2,6-diaminopimelate. It functions in the pathway amino-acid biosynthesis; L-lysine biosynthesis via DAP pathway; DL-2,6-diaminopimelate from LL-2,6-diaminopimelate: step 1/1. Functionally, catalyzes the stereoinversion of LL-2,6-diaminopimelate (L,L-DAP) to meso-diaminopimelate (meso-DAP), a precursor of L-lysine and an essential component of the bacterial peptidoglycan. The sequence is that of Diaminopimelate epimerase from Shewanella woodyi (strain ATCC 51908 / MS32).